A 137-amino-acid polypeptide reads, in one-letter code: Large ribosomal subunit protein uL16 (137 aa).

It belongs to the universal ribosomal protein uL16 family. In terms of assembly, part of the 50S ribosomal subunit.

Binds 23S rRNA and is also seen to make contacts with the A and possibly P site tRNAs. The protein is Large ribosomal subunit protein uL16 of Pseudomonas syringae pv. tomato (strain ATCC BAA-871 / DC3000).